The chain runs to 505 residues: L-arabinose isomerase (505 aa).

Residues E308, E335, H352, and H453 each contribute to the Mn(2+) site.

The protein belongs to the arabinose isomerase family. It depends on Mn(2+) as a cofactor.

It carries out the reaction beta-L-arabinopyranose = L-ribulose. It participates in carbohydrate degradation; L-arabinose degradation via L-ribulose; D-xylulose 5-phosphate from L-arabinose (bacterial route): step 1/3. Catalyzes the conversion of L-arabinose to L-ribulose. This is L-arabinose isomerase from Bifidobacterium animalis subsp. lactis (strain AD011).